Consider the following 354-residue polypeptide: Putative cinnamyl alcohol dehydrogenase 4 (354 aa).

Zn(2+) contacts are provided by Cys-47, His-69, Glu-70, Cys-100, Cys-103, Cys-106, Cys-114, and Cys-163. Residues Thr-167, 188 to 193 (GLGGLG), 211 to 216 (STSESK), Thr-251, and 297 to 299 (SVT) each bind NADP(+).

The protein belongs to the zinc-containing alcohol dehydrogenase family. As to quaternary structure, homodimer. Requires Zn(2+) as cofactor.

It catalyses the reaction (E)-cinnamyl alcohol + NADP(+) = (E)-cinnamaldehyde + NADPH + H(+). It carries out the reaction (E)-coniferol + NADP(+) = (E)-coniferaldehyde + NADPH + H(+). The catalysed reaction is (E)-sinapyl alcohol + NADP(+) = (E)-sinapaldehyde + NADPH + H(+). The enzyme catalyses (E)-4-coumaroyl alcohol + NADP(+) = (E)-4-coumaraldehyde + NADPH + H(+). It catalyses the reaction (E)-caffeyl alcohol + NADP(+) = (E)-caffeyl aldehyde + NADPH + H(+). The protein operates within aromatic compound metabolism; phenylpropanoid biosynthesis. Involved in lignin biosynthesis. Catalyzes the final step specific for the production of lignin monomers. Catalyzes the NADPH-dependent reduction of coniferaldehyde, 5-hydroxyconiferaldehyde, sinapaldehyde, 4-coumaraldehyde and caffeyl aldehyde to their respective alcohols. In Oryza sativa subsp. japonica (Rice), this protein is Putative cinnamyl alcohol dehydrogenase 4.